Consider the following 284-residue polypeptide: Elongation factor Ts (284 aa).

The involved in Mg(2+) ion dislocation from EF-Tu stretch occupies residues 80-83 (TDFV).

This sequence belongs to the EF-Ts family.

It localises to the cytoplasm. Functionally, associates with the EF-Tu.GDP complex and induces the exchange of GDP to GTP. It remains bound to the aminoacyl-tRNA.EF-Tu.GTP complex up to the GTP hydrolysis stage on the ribosome. The sequence is that of Elongation factor Ts from Photobacterium profundum (strain SS9).